The following is a 236-amino-acid chain: (5-formylfuran-3-yl)methyl phosphate synthase (236 aa).

Lys27 functions as the Schiff-base intermediate with substrate in the catalytic mechanism. Residue Lys85 is the Proton acceptor of the active site.

It belongs to the MfnB family.

The enzyme catalyses 2 D-glyceraldehyde 3-phosphate = 4-(hydroxymethyl)-2-furancarboxaldehyde phosphate + phosphate + 2 H2O. Its pathway is cofactor biosynthesis; methanofuran biosynthesis. In terms of biological role, catalyzes the formation of 4-(hydroxymethyl)-2-furancarboxaldehyde phosphate (4-HFC-P) from two molecules of glyceraldehyde-3-P (GA-3-P). The chain is (5-formylfuran-3-yl)methyl phosphate synthase from Methanococcus maripaludis (strain C5 / ATCC BAA-1333).